We begin with the raw amino-acid sequence, 305 residues long: Aurasperone B biosynthesis cluster protein A (305 aa).

The first 26 residues, 1 to 26, serve as a signal peptide directing secretion; that stretch reads MSIFFSIRFWPAAISAAILWLPQVLG. N-linked (GlcNAc...) asparagine glycans are attached at residues Asn29, Asn34, Asn64, Asn83, Asn132, Asn183, Asn218, and Asn288.

Belongs to the bfoA family.

Part of the gene cluster that mediates the biosynthesis of aurasperone B, a dimeric gamma-naphthopyrone. The first step in the biosynthesis of aurasperone B is the production of gamma-naphthopyrone precursor YWA1 by the non-reducing polyketide synthase albA, via condensation of one acetyl-CoA starter unit with 6 malonyl-CoA units. YWA1 is then methylated by aunE at position C-6 to yield foncesin which is further methylated at position C-8 by aunD to produce fonsecin B. A key enzyme in the biosynthetic pathway is the cytochrome P450 monooxygenase aunB which catalyzes the oxidative dimerization of fonsecin B to aurasperone B. AunB also catalyzes the oxidative dimerization of rubrofusarin B into aurasperone A. The sequence is that of Aurasperone B biosynthesis cluster protein A from Aspergillus niger (strain ATCC MYA-4892 / CBS 513.88 / FGSC A1513).